The primary structure comprises 132 residues: Small ribosomal subunit protein uS13 (132 aa).

The disordered stretch occupies residues 106 to 132 (PVRGQVTQKNARTRKGPRKTVAGKKGK). A compositionally biased stretch (basic residues) spans 116 to 132 (ARTRKGPRKTVAGKKGK).

This sequence belongs to the universal ribosomal protein uS13 family. Part of the 30S ribosomal subunit. Forms a loose heterodimer with protein S19. Forms two bridges to the 50S subunit in the 70S ribosome.

Located at the top of the head of the 30S subunit, it contacts several helices of the 16S rRNA. In the 70S ribosome it contacts the 23S rRNA (bridge B1a) and protein L5 of the 50S subunit (bridge B1b), connecting the 2 subunits; these bridges are implicated in subunit movement. Contacts the tRNAs in the A and P-sites. The polypeptide is Small ribosomal subunit protein uS13 (Mycoplasmopsis pulmonis (strain UAB CTIP) (Mycoplasma pulmonis)).